The sequence spans 98 residues: NADH-ubiquinone oxidoreductase chain 4L (98 aa).

Helical transmembrane passes span 1–21, 28–48, and 59–79; these read MTSI…GVLM, STLL…SLLI, and APLI…ALLV.

The protein belongs to the complex I subunit 4L family. As to quaternary structure, core subunit of respiratory chain NADH dehydrogenase (Complex I) which is composed of 45 different subunits.

It localises to the mitochondrion inner membrane. The enzyme catalyses a ubiquinone + NADH + 5 H(+)(in) = a ubiquinol + NAD(+) + 4 H(+)(out). Functionally, core subunit of the mitochondrial membrane respiratory chain NADH dehydrogenase (Complex I) which catalyzes electron transfer from NADH through the respiratory chain, using ubiquinone as an electron acceptor. Part of the enzyme membrane arm which is embedded in the lipid bilayer and involved in proton translocation. The chain is NADH-ubiquinone oxidoreductase chain 4L (MT-ND4L) from Phascolarctos cinereus (Koala).